A 937-amino-acid chain; its full sequence is Inactive tyrosine-protein kinase transmembrane receptor ROR1 (937 aa).

A signal peptide spans 1-29; it reads MHRPRRRGTRPPLLALLAALLLAARGAAA. The Extracellular segment spans residues 30–406; the sequence is QETELSVSAE…KEKNKMEILY (377 aa). The Ig-like C2-type domain occupies 42–147; sequence PTSSWNISSE…EVVSSTGVLF (106 aa). 2 N-linked (GlcNAc...) asparagine glycosylation sites follow: Asn47 and Asn66. Cystine bridges form between Cys79–Cys131, Cys170–Cys235, Cys178–Cys228, Cys219–Cys260, Cys248–Cys296, Cys252–Cys282, Cys313–Cys391, Cys334–Cys374, and Cys362–Cys386. In terms of domain architecture, FZ spans 165–299; that stretch reads EEDGFCQPYR…SPEAANCIRI (135 aa). A glycan (N-linked (GlcNAc...) asparagine) is linked at Asn184. A Kringle domain is found at 312-391; sequence KCYNSTGVDY…KSDLCDIPAC (80 aa). N-linked (GlcNAc...) asparagine glycosylation occurs at Asn315. A helical transmembrane segment spans residues 407–427; the sequence is ILVPSVAIPLAIALLFFFICV. The Cytoplasmic portion of the chain corresponds to 428–937; that stretch reads CRNNQKSSSA…HTESMISAEL (510 aa). The region spanning 473 to 746 is the Protein kinase domain; sequence VRFMEELGEC…PRFKDIHVRL (274 aa). ATP-binding positions include 479–487 and Lys506; that span reads LGECAFGKI. Tyr645 bears the Phosphotyrosine; by autocatalysis mark. Residues 753-762 show a composition bias toward low complexity; that stretch reads SSHTSSTTPS. Disordered stretches follow at residues 753–779 and 833–890; these read SSHT…SPVS and AAHY…HMSI. The span at 763 to 779 shows a compositional bias: polar residues; sequence GGNATTQTTSLSASPVS. The segment covering 854-864 has biased composition (low complexity); sequence RSPSSASGSTS. A compositionally biased stretch (polar residues) spans 865–880; sequence TGHVTSLPSSGSNQEA.

Belongs to the protein kinase superfamily. Tyr protein kinase family. ROR subfamily. In terms of assembly, interacts with ERBB2 and IGFBP5. Expressed strongly in human heart, lung and kidney, but weakly in the CNS. Isoform Short is strongly expressed in fetal and adult CNS and in a variety of human cancers, including those originating from CNS or PNS neuroectoderm.

The protein localises to the membrane. Its subcellular location is the cell projection. It localises to the axon. Has very low kinase activity in vitro and is unlikely to function as a tyrosine kinase in vivo. Receptor for ligand WNT5A which activate downstream NFkB signaling pathway and may result in the inhibition of WNT3A-mediated signaling. In inner ear, crucial for spiral ganglion neurons to innervate auditory hair cells. Via IGFBP5 ligand, forms a complex with ERBB2 to enhance CREB oncogenic signaling. In Homo sapiens (Human), this protein is Inactive tyrosine-protein kinase transmembrane receptor ROR1 (ROR1).